The following is an 89-amino-acid chain: Small ribosomal subunit protein uS14A (89 aa).

This sequence belongs to the universal ribosomal protein uS14 family. Part of the 30S ribosomal subunit. Contacts proteins S3 and S10.

Its function is as follows. Binds 16S rRNA, required for the assembly of 30S particles and may also be responsible for determining the conformation of the 16S rRNA at the A site. The polypeptide is Small ribosomal subunit protein uS14A (Listeria innocua serovar 6a (strain ATCC BAA-680 / CLIP 11262)).